Here is a 544-residue protein sequence, read N- to C-terminus: Tyrosine-protein kinase Yes (544 aa).

The N-myristoyl glycine moiety is linked to residue Gly-2. Residues 92–153 (GGVTFFVALY…PSNYVAPADS (62 aa)) enclose the SH3 domain. An SH2 domain is found at 159-256 (WYFGKLSRKD…GLCYKLTTVC (98 aa)). One can recognise a Protein kinase domain in the interval 278 to 531 (LRLDVRLGQG…YIQSFLEDYF (254 aa)). ATP contacts are provided by residues 284 to 292 (LGQGCFGEV) and Lys-306. Asp-397 acts as the Proton acceptor in catalysis. Tyr-427 is subject to Phosphotyrosine; by autocatalysis.

The protein belongs to the protein kinase superfamily. Tyr protein kinase family. SRC subfamily.

The catalysed reaction is L-tyrosyl-[protein] + ATP = O-phospho-L-tyrosyl-[protein] + ADP + H(+). This is Tyrosine-protein kinase Yes (yes) from Xiphophorus hellerii (Green swordtail).